We begin with the raw amino-acid sequence, 97 residues long: uncharacterized protein (97 aa).

Positions 1-16 are cleaved as a signal peptide; it reads MKQTVLLLFTALFLSG. Cys-17 carries N-palmitoyl cysteine lipidation. Cys-17 carries S-diacylglycerol cysteine lipidation.

Its subcellular location is the cell membrane. This is an uncharacterized protein from Bacillus subtilis (strain 168).